Consider the following 533-residue polypeptide: Retinoid isomerohydrolase (533 aa).

Residue S2 is modified to N-acetylserine. A phosphothreonine mark is found at T101 and T105. The S-palmitoyl cysteine; in membrane form moiety is linked to residue C112. N6-acetyllysine is present on K113. Position 117 is a phosphoserine (S117). Position 180 (H180) interacts with Fe cation. The S-palmitoyl cysteine; in membrane form moiety is linked to residue C231. Positions 241 and 313 each coordinate Fe cation. 2 S-palmitoyl cysteine; in membrane form lipidation sites follow: C329 and C330. Residue H527 coordinates Fe cation.

Belongs to the carotenoid oxygenase family. Interacts with MYO7A; this mediates light-dependent intracellular transport of RPE65. Fe(2+) serves as cofactor. Palmitoylation by LRAT regulates ligand binding specificity; the palmitoylated form (membrane form) specifically binds all-trans-retinyl-palmitate, while the soluble unpalmitoylated form binds all-trans-retinol (vitamin A). As to expression, retinal pigment epithelium specific.

The protein resides in the cytoplasm. It localises to the cell membrane. The protein localises to the microsome membrane. The catalysed reaction is an all-trans-retinyl ester + H2O = 11-cis-retinol + a fatty acid + H(+). It catalyses the reaction lutein = (3R,3'S)-zeaxanthin. The enzyme catalyses all-trans-retinyl hexadecanoate + H2O = 11-cis-retinol + hexadecanoate + H(+). Functionally, critical isomerohydrolase in the retinoid cycle involved in regeneration of 11-cis-retinal, the chromophore of rod and cone opsins. Catalyzes the cleavage and isomerization of all-trans-retinyl fatty acid esters to 11-cis-retinol which is further oxidized by 11-cis retinol dehydrogenase to 11-cis-retinal for use as visual chromophore. Essential for the production of 11-cis retinal for both rod and cone photoreceptors. Also capable of catalyzing the isomerization of lutein to meso-zeaxanthin an eye-specific carotenoid. The soluble form binds vitamin A (all-trans-retinol), making it available for LRAT processing to all-trans-retinyl ester. The membrane form, palmitoylated by LRAT, binds all-trans-retinyl esters, making them available for IMH (isomerohydrolase) processing to all-cis-retinol. The soluble form is regenerated by transferring its palmitoyl groups onto 11-cis-retinol, a reaction catalyzed by LRAT. In Mus musculus (Mouse), this protein is Retinoid isomerohydrolase (Rpe65).